A 139-amino-acid chain; its full sequence is Peptide methionine sulfoxide reductase MsrB (139 aa).

One can recognise a MsrB domain in the interval 9 to 131 (TPSDNTEMTE…NSASLSFIDD (123 aa)). Cys48, Cys51, Cys97, and Cys100 together coordinate Zn(2+). Cys120 (nucleophile) is an active-site residue.

The protein belongs to the MsrB Met sulfoxide reductase family. Requires Zn(2+) as cofactor.

The catalysed reaction is L-methionyl-[protein] + [thioredoxin]-disulfide + H2O = L-methionyl-(R)-S-oxide-[protein] + [thioredoxin]-dithiol. In Pectobacterium atrosepticum (strain SCRI 1043 / ATCC BAA-672) (Erwinia carotovora subsp. atroseptica), this protein is Peptide methionine sulfoxide reductase MsrB.